The primary structure comprises 112 residues: Protein GAST1 (112 aa).

An N-terminal signal peptide occupies residues 1–25; sequence MAGKMSIVLFVLLVVFLTQNQVSRA.

The protein belongs to the GASA family. Post-translationally, six disulfide bonds may be present. As to expression, all shoot organs.

Its subcellular location is the secreted. This Solanum lycopersicum (Tomato) protein is Protein GAST1 (GAST1).